The chain runs to 227 residues: Cytochrome c oxidase subunit 2 (227 aa).

Over 1–14 (MAYPHQLGFQDATS) the chain is Mitochondrial intermembrane. Residues 15-45 (PIMEELLSFHDHTLMIVFLISSLVLYLISLM) traverse the membrane as a helical segment. The Mitochondrial matrix portion of the chain corresponds to 46–59 (LTTKLTHTSTMDAQ). A helical membrane pass occupies residues 60-87 (EVETVWTILPAIILIMIALPSLRILYMM). The Mitochondrial intermembrane portion of the chain corresponds to 88–227 (DEINNPLLTV…SFENWTTSMT (140 aa)). Cu cation-binding residues include histidine 161, cysteine 196, glutamate 198, cysteine 200, histidine 204, and methionine 207. Glutamate 198 lines the Mg(2+) pocket.

It belongs to the cytochrome c oxidase subunit 2 family. In terms of assembly, component of the cytochrome c oxidase (complex IV, CIV), a multisubunit enzyme composed of 14 subunits. The complex is composed of a catalytic core of 3 subunits MT-CO1, MT-CO2 and MT-CO3, encoded in the mitochondrial DNA, and 11 supernumerary subunits COX4I, COX5A, COX5B, COX6A, COX6B, COX6C, COX7A, COX7B, COX7C, COX8 and NDUFA4, which are encoded in the nuclear genome. The complex exists as a monomer or a dimer and forms supercomplexes (SCs) in the inner mitochondrial membrane with NADH-ubiquinone oxidoreductase (complex I, CI) and ubiquinol-cytochrome c oxidoreductase (cytochrome b-c1 complex, complex III, CIII), resulting in different assemblies (supercomplex SCI(1)III(2)IV(1) and megacomplex MCI(2)III(2)IV(2)). Found in a complex with TMEM177, COA6, COX18, COX20, SCO1 and SCO2. Interacts with TMEM177 in a COX20-dependent manner. Interacts with COX20. Interacts with COX16. It depends on Cu cation as a cofactor.

The protein localises to the mitochondrion inner membrane. It catalyses the reaction 4 Fe(II)-[cytochrome c] + O2 + 8 H(+)(in) = 4 Fe(III)-[cytochrome c] + 2 H2O + 4 H(+)(out). In terms of biological role, component of the cytochrome c oxidase, the last enzyme in the mitochondrial electron transport chain which drives oxidative phosphorylation. The respiratory chain contains 3 multisubunit complexes succinate dehydrogenase (complex II, CII), ubiquinol-cytochrome c oxidoreductase (cytochrome b-c1 complex, complex III, CIII) and cytochrome c oxidase (complex IV, CIV), that cooperate to transfer electrons derived from NADH and succinate to molecular oxygen, creating an electrochemical gradient over the inner membrane that drives transmembrane transport and the ATP synthase. Cytochrome c oxidase is the component of the respiratory chain that catalyzes the reduction of oxygen to water. Electrons originating from reduced cytochrome c in the intermembrane space (IMS) are transferred via the dinuclear copper A center (CU(A)) of subunit 2 and heme A of subunit 1 to the active site in subunit 1, a binuclear center (BNC) formed by heme A3 and copper B (CU(B)). The BNC reduces molecular oxygen to 2 water molecules using 4 electrons from cytochrome c in the IMS and 4 protons from the mitochondrial matrix. The protein is Cytochrome c oxidase subunit 2 (MT-CO2) of Georychus capensis (Cape mole rat).